The primary structure comprises 98 residues: Small ribosomal subunit protein bS20 (98 aa).

The protein belongs to the bacterial ribosomal protein bS20 family.

Functionally, binds directly to 16S ribosomal RNA. The sequence is that of Small ribosomal subunit protein bS20 from Synechococcus sp. (strain CC9902).